We begin with the raw amino-acid sequence, 216 residues long: Ribosomal RNA small subunit methyltransferase G (216 aa).

Residues Gly83, Met88, 134–135 (VE), and Arg149 each bind S-adenosyl-L-methionine.

This sequence belongs to the methyltransferase superfamily. RNA methyltransferase RsmG family.

The protein localises to the cytoplasm. It carries out the reaction guanosine(527) in 16S rRNA + S-adenosyl-L-methionine = N(7)-methylguanosine(527) in 16S rRNA + S-adenosyl-L-homocysteine. In terms of biological role, specifically methylates the N7 position of guanine in position 527 of 16S rRNA. The protein is Ribosomal RNA small subunit methyltransferase G of Pseudomonas putida (strain ATCC 700007 / DSM 6899 / JCM 31910 / BCRC 17059 / LMG 24140 / F1).